The chain runs to 71 residues: MPQVKVKEGEPFDVALRRFKRGCEKAGILSEVRRREQYEKPTQERKRKRAAAVKRHLKKLQREQLARKRLY.

It belongs to the bacterial ribosomal protein bS21 family.

The protein is Small ribosomal subunit protein bS21 of Alcanivorax borkumensis (strain ATCC 700651 / DSM 11573 / NCIMB 13689 / SK2).